We begin with the raw amino-acid sequence, 533 residues long: DnaJ homolog subfamily C member 21 (533 aa).

One can recognise a J domain in the interval 3–70 (CHYEALGVRR…ERAWYDNHRE (68 aa)). 3 disordered regions span residues 278–311 (QFGD…AELY), 327–473 (KAMR…RVPA), and 503–533 (KATG…RKNR). A phosphoserine mark is found at Ser-283 and Ser-302. Basic and acidic residues predominate over residues 291–302 (QELRDGQDGKDS). Residues 315 to 339 (YCPACDKSFKTEKAMRNHEKSKKHR) form a C2H2-type 1 zinc finger. Positions 357-369 (SGPQTDENSLNAN) are enriched in polar residues. The residue at position 370 (Ser-370) is a Phosphoserine. Positions 381-392 (KLSRKQKKKKQK) are enriched in basic residues. Residues 393 to 403 (PAQNYDDNFNE) are compositionally biased toward polar residues. The span at 455-464 (SKPKGKKAKD) shows a compositional bias: basic residues. A C2H2-type 2 zinc finger spans residues 484 to 508 (SCTTCHSEFPSRNKLFDHLKATGHA). Ser-512 bears the Phosphoserine mark. Over residues 512 to 523 (SSSTSLNSVTNS) the composition is skewed to low complexity. Residues 524-533 (RNKKEKRKNR) are compositionally biased toward basic residues.

Interacts with HSPA8, PA2G4 and ZNF622.

It localises to the cytoplasm. Its subcellular location is the nucleus. The protein localises to the nucleolus. May act as a co-chaperone for HSP70. May play a role in ribosomal RNA (rRNA) biogenesis, possibly in the maturation of the 60S subunit. Binds the precursor 45S rRNA. The sequence is that of DnaJ homolog subfamily C member 21 (DNAJC21) from Bos taurus (Bovine).